We begin with the raw amino-acid sequence, 397 residues long: Probable sugar efflux transporter (397 aa).

The next 12 helical transmembrane spans lie at V15–L35, G51–L71, L81–F101, V103–A123, A136–V156, F170–L190, P209–Y229, F246–G266, A273–P293, L301–V321, V333–G353, and D364–F384.

Belongs to the major facilitator superfamily. SotB (TC 2.A.1.2) family.

The protein resides in the cell inner membrane. In terms of biological role, involved in the efflux of sugars. The physiological role may be the reduction of the intracellular concentration of toxic sugars or sugar metabolites. The protein is Probable sugar efflux transporter of Escherichia fergusonii (strain ATCC 35469 / DSM 13698 / CCUG 18766 / IAM 14443 / JCM 21226 / LMG 7866 / NBRC 102419 / NCTC 12128 / CDC 0568-73).